A 188-amino-acid polypeptide reads, in one-letter code: Holliday junction branch migration complex subunit RuvA (188 aa).

A domain I region spans residues 1 to 64 (MIAGISGRVL…QDGITLYGFS (64 aa)). Residues 65–143 (NERKKELFLS…SAGIKDMRIY (79 aa)) are domain II. Y143 is a region of interest (flexible linker). The interval 143–188 (YHESLEALISLGYPEKQAREAVKHVYREGMKTSELIKEALKFLSQR) is domain III.

This sequence belongs to the RuvA family. Homotetramer. Forms an RuvA(8)-RuvB(12)-Holliday junction (HJ) complex. HJ DNA is sandwiched between 2 RuvA tetramers; dsDNA enters through RuvA and exits via RuvB. An RuvB hexamer assembles on each DNA strand where it exits the tetramer. Each RuvB hexamer is contacted by two RuvA subunits (via domain III) on 2 adjacent RuvB subunits; this complex drives branch migration. In the full resolvosome a probable DNA-RuvA(4)-RuvB(12)-RuvC(2) complex forms which resolves the HJ.

Its subcellular location is the cytoplasm. Functionally, the RuvA-RuvB-RuvC complex processes Holliday junction (HJ) DNA during genetic recombination and DNA repair, while the RuvA-RuvB complex plays an important role in the rescue of blocked DNA replication forks via replication fork reversal (RFR). RuvA specifically binds to HJ cruciform DNA, conferring on it an open structure. The RuvB hexamer acts as an ATP-dependent pump, pulling dsDNA into and through the RuvAB complex. HJ branch migration allows RuvC to scan DNA until it finds its consensus sequence, where it cleaves and resolves the cruciform DNA. The protein is Holliday junction branch migration complex subunit RuvA of Thermotoga petrophila (strain ATCC BAA-488 / DSM 13995 / JCM 10881 / RKU-1).